The following is a 144-amino-acid chain: Large ribosomal subunit protein uL15 (144 aa).

The segment at 1–56 (MELNNLKPAAGAKHAKRRVGRGIGSGLGKTAGRGHKGQKSRSGGFHKVGFEGGQMP) is disordered. The span at 21-31 (RGIGSGLGKTA) shows a compositional bias: gly residues.

This sequence belongs to the universal ribosomal protein uL15 family. As to quaternary structure, part of the 50S ribosomal subunit.

Binds to the 23S rRNA. This is Large ribosomal subunit protein uL15 from Burkholderia ambifaria (strain MC40-6).